A 365-amino-acid chain; its full sequence is Glycolaldehyde reductase (365 aa).

NAD(+)-binding residues include Asp37, Gly94, Lys95, Thr116, Ser119, Ser125, Leu127, and Tyr131. Residues Asp171, His254, and His271 each coordinate Zn(2+).

It belongs to the iron-containing alcohol dehydrogenase family. Zn(2+) serves as cofactor.

It carries out the reaction ethylene glycol + NAD(+) = glycolaldehyde + NADH + H(+). Its activity is regulated as follows. Is subject to substrate inhibition. Functionally, oxidoreductase involved in the non-carboxylating pentose bisphosphate pathway, a nucleoside degradation pathway present in some halophilic archaea. Catalyzes the reduction of glycolaldehyde to ethylene glycol. Cannot catalyze the oxidation of glycerol 1-phosphate nor the reduction of dihydroxyacetone phosphate (DHAP). The sequence is that of Glycolaldehyde reductase from Halobacterium salinarum (strain ATCC 700922 / JCM 11081 / NRC-1) (Halobacterium halobium).